Here is a 104-residue protein sequence, read N- to C-terminus: UPF0235 protein Paes_1868 (104 aa).

Belongs to the UPF0235 family.

The protein is UPF0235 protein Paes_1868 of Prosthecochloris aestuarii (strain DSM 271 / SK 413).